Here is a 311-residue protein sequence, read N- to C-terminus: Apulose-4-phosphate transketolase subunit B (311 aa).

It belongs to the transketolase family. Probable heterodimer composed of AptA and AptB. Thiamine diphosphate is required as a cofactor.

It carries out the reaction apulose 4-phosphate + D-glyceraldehyde 3-phosphate = D-xylulose 5-phosphate + dihydroxyacetone phosphate. It functions in the pathway carbohydrate metabolism. Involved in catabolism of D-apiose. Catalyzes the transfer of the glycolaldehyde group from apulose-4-phosphate to D-glyceraldehyde 3-phosphate, generating dihydroxyacetone phosphate and D-xylulose-5-phosphate. The sequence is that of Apulose-4-phosphate transketolase subunit B from Actinobacillus succinogenes (strain ATCC 55618 / DSM 22257 / CCUG 43843 / 130Z).